The following is a 53-amino-acid chain: uncharacterized protein (53 aa).

Residues 28–45 (AIVFSLAVFGIVEAYYYW) traverse the membrane as a helical segment.

The protein localises to the host membrane. This is an uncharacterized protein from Acidianus convivator (ABV).